The sequence spans 309 residues: Homoserine kinase (309 aa).

91-101 serves as a coordination point for ATP; the sequence is PIGSGLGSSAC.

It belongs to the GHMP kinase family. Homoserine kinase subfamily.

Its subcellular location is the cytoplasm. The catalysed reaction is L-homoserine + ATP = O-phospho-L-homoserine + ADP + H(+). The protein operates within amino-acid biosynthesis; L-threonine biosynthesis; L-threonine from L-aspartate: step 4/5. Its function is as follows. Catalyzes the ATP-dependent phosphorylation of L-homoserine to L-homoserine phosphate. This chain is Homoserine kinase, found in Edwardsiella ictaluri (strain 93-146).